Reading from the N-terminus, the 199-residue chain is Dephospho-CoA kinase (199 aa).

The DPCK domain occupies 3–199; the sequence is VIGLTGSIGM…AAAKMPRRRS (197 aa). 11–16 lines the ATP pocket; the sequence is GMGKST.

Belongs to the CoaE family.

The protein localises to the cytoplasm. The catalysed reaction is 3'-dephospho-CoA + ATP = ADP + CoA + H(+). It functions in the pathway cofactor biosynthesis; coenzyme A biosynthesis; CoA from (R)-pantothenate: step 5/5. Its function is as follows. Catalyzes the phosphorylation of the 3'-hydroxyl group of dephosphocoenzyme A to form coenzyme A. In Nitrobacter winogradskyi (strain ATCC 25391 / DSM 10237 / CIP 104748 / NCIMB 11846 / Nb-255), this protein is Dephospho-CoA kinase.